We begin with the raw amino-acid sequence, 518 residues long: Protein nucleotidyltransferase YdiU (518 aa).

The segment covering Met-1–Leu-10 has biased composition (basic and acidic residues). Positions Met-1–Arg-23 are disordered. Gly-100, Gly-102, Arg-103, Lys-123, Asp-135, Gly-136, Arg-193, and Arg-200 together coordinate ATP. Residue Asp-270 is the Proton acceptor of the active site. Mg(2+) is bound by residues Asn-271 and Asp-280. Asp-280 contacts ATP.

It belongs to the SELO family. Requires Mg(2+) as cofactor. It depends on Mn(2+) as a cofactor.

It catalyses the reaction L-seryl-[protein] + ATP = 3-O-(5'-adenylyl)-L-seryl-[protein] + diphosphate. It carries out the reaction L-threonyl-[protein] + ATP = 3-O-(5'-adenylyl)-L-threonyl-[protein] + diphosphate. The catalysed reaction is L-tyrosyl-[protein] + ATP = O-(5'-adenylyl)-L-tyrosyl-[protein] + diphosphate. The enzyme catalyses L-histidyl-[protein] + UTP = N(tele)-(5'-uridylyl)-L-histidyl-[protein] + diphosphate. It catalyses the reaction L-seryl-[protein] + UTP = O-(5'-uridylyl)-L-seryl-[protein] + diphosphate. It carries out the reaction L-tyrosyl-[protein] + UTP = O-(5'-uridylyl)-L-tyrosyl-[protein] + diphosphate. In terms of biological role, nucleotidyltransferase involved in the post-translational modification of proteins. It can catalyze the addition of adenosine monophosphate (AMP) or uridine monophosphate (UMP) to a protein, resulting in modifications known as AMPylation and UMPylation. The polypeptide is Protein nucleotidyltransferase YdiU (Xanthomonas axonopodis pv. citri (strain 306)).